The chain runs to 96 residues: Aspartyl/glutamyl-tRNA(Asn/Gln) amidotransferase subunit C (96 aa).

The protein belongs to the GatC family. In terms of assembly, heterotrimer of A, B and C subunits.

The catalysed reaction is L-glutamyl-tRNA(Gln) + L-glutamine + ATP + H2O = L-glutaminyl-tRNA(Gln) + L-glutamate + ADP + phosphate + H(+). It catalyses the reaction L-aspartyl-tRNA(Asn) + L-glutamine + ATP + H2O = L-asparaginyl-tRNA(Asn) + L-glutamate + ADP + phosphate + 2 H(+). In terms of biological role, allows the formation of correctly charged Asn-tRNA(Asn) or Gln-tRNA(Gln) through the transamidation of misacylated Asp-tRNA(Asn) or Glu-tRNA(Gln) in organisms which lack either or both of asparaginyl-tRNA or glutaminyl-tRNA synthetases. The reaction takes place in the presence of glutamine and ATP through an activated phospho-Asp-tRNA(Asn) or phospho-Glu-tRNA(Gln). The protein is Aspartyl/glutamyl-tRNA(Asn/Gln) amidotransferase subunit C of Chloroflexus aggregans (strain MD-66 / DSM 9485).